The primary structure comprises 387 residues: MKLNKKLLMAALAGAIVVGGGVNTFAADEPGAIKVDKAPEAPSQELKLTKEEAEKALKKEKPIAKERLRRLGITSEFILNQIDKATSREGLESLVQTIKQSYLKDHPIKEEKTEETPKYNNLFDKHELGGLGKDKGPGRFDENGWENNEHGYETRENAEKAAVKALGDKEINKSYTISQGVDGRYYYVLSREEAETPKKPEEKKPEDKRPKMTIDQWLLKNAKEDAIAELKKAGITSDFYFNAINKAKTVEEVNALKNEILKAHAGKEVNPSTPEVTPSVPQNHYHENDYANIGAGEGTKEDGKKENSKEGIKRKTAREEKPGKEEKPAKEDKKENKKKENTDSPNKKKKEKAALPEAGRRKAEILTLAAASLSSVAGAFISLKKRK.

A signal peptide spans 1–26 (MKLNKKLLMAALAGAIVVGGGVNTFA). Positions 122–155 (LFDKHELGGLGKDKGPGRFDENGWENNEHGYETR) are disordered. The tract at residues 213 to 265 (TIDQWLLKNAKEDAIAELKKAGITSDFYFNAINKAKTVEEVNALKNEILKAHA) is GA module. A disordered region spans residues 266–360 (GKEVNPSTPE…EKAALPEAGR (95 aa)). The segment covering 270 to 282 (NPSTPEVTPSVPQ) has biased composition (polar residues). Basic and acidic residues predominate over residues 298–360 (GTKEDGKKEN…EKAALPEAGR (63 aa)). The LPXTG sorting signal motif lies at 355–359 (LPEAG). Position 358 is a pentaglycyl murein peptidoglycan amidated alanine (Ala358). The propeptide at 359–387 (GRRKAEILTLAAASLSSVAGAFISLKKRK) is removed by sortase.

It localises to the secreted. Its subcellular location is the cell wall. In terms of biological role, binds serum albumin. The protein is Peptostreptococcal albumin-binding protein (pab) of Finegoldia magna (Peptostreptococcus magnus).